Consider the following 165-residue polypeptide: ATP synthase subunit b (165 aa).

Residues 11–31 (LIFWTIVNFLLLVFLLGKFAW) form a helical membrane-spanning segment.

This sequence belongs to the ATPase B chain family. F-type ATPases have 2 components, F(1) - the catalytic core - and F(0) - the membrane proton channel. F(1) has five subunits: alpha(3), beta(3), gamma(1), delta(1), epsilon(1). F(0) has three main subunits: a(1), b(2) and c(10-14). The alpha and beta chains form an alternating ring which encloses part of the gamma chain. F(1) is attached to F(0) by a central stalk formed by the gamma and epsilon chains, while a peripheral stalk is formed by the delta and b chains.

It is found in the cell membrane. In terms of biological role, f(1)F(0) ATP synthase produces ATP from ADP in the presence of a proton or sodium gradient. F-type ATPases consist of two structural domains, F(1) containing the extramembraneous catalytic core and F(0) containing the membrane proton channel, linked together by a central stalk and a peripheral stalk. During catalysis, ATP synthesis in the catalytic domain of F(1) is coupled via a rotary mechanism of the central stalk subunits to proton translocation. Its function is as follows. Component of the F(0) channel, it forms part of the peripheral stalk, linking F(1) to F(0). This Elusimicrobium minutum (strain Pei191) protein is ATP synthase subunit b.